Reading from the N-terminus, the 683-residue chain is Protein kinase C eta type (683 aa).

The 118-residue stretch at 1-118 folds into the C2 domain; that stretch reads MSSGTMKFNG…LRTAGTSDTF (118 aa). Phosphoserine occurs at positions 28 and 32. 2 consecutive Phorbol-ester/DAG-type zinc fingers follow at residues 171 to 222 and 245 to 295; these read GHKF…VTAC and PHKF…APNC. Phosphoserine is present on serine 317. The 260-residue stretch at 355–614 folds into the Protein kinase domain; it reads FEFIRVLGKG…EHEILRHPFF (260 aa). Residues 361–369 and lysine 384 contribute to the ATP site; that span reads LGKGSFGKV. Aspartate 479 (proton acceptor) is an active-site residue. A Phosphothreonine; by PDPK1 modification is found at threonine 513. In terms of domain architecture, AGC-kinase C-terminal spans 615–683; the sequence is KEIDWVQLNH…FSYVSPELQP (69 aa). Threonine 656 carries the post-translational modification Phosphothreonine. Serine 675 is subject to Phosphoserine.

The protein belongs to the protein kinase superfamily. AGC Ser/Thr protein kinase family. PKC subfamily. In terms of assembly, interacts with FYN. Interacts with RALA. Interacts with DGKQ.

The protein resides in the cytoplasm. It carries out the reaction L-seryl-[protein] + ATP = O-phospho-L-seryl-[protein] + ADP + H(+). The catalysed reaction is L-threonyl-[protein] + ATP = O-phospho-L-threonyl-[protein] + ADP + H(+). With respect to regulation, novel PKCs (PRKCD, PRKCE, PRKCH and PRKCQ) are calcium-insensitive, but activated by diacylglycerol (DAG) and phosphatidylserine. Three specific sites; Thr-513 (activation loop of the kinase domain), Thr-656 (turn motif) and Ser-675 (hydrophobic region), need to be phosphorylated for its full activation. Functionally, calcium-independent, phospholipid- and diacylglycerol (DAG)-dependent serine/threonine-protein kinase that is involved in the regulation of cell differentiation in keratinocytes and pre-B cell receptor, mediates regulation of epithelial tight junction integrity and foam cell formation, and is required for glioblastoma proliferation and apoptosis prevention in MCF-7 cells. In keratinocytes, binds and activates the tyrosine kinase FYN, which in turn blocks epidermal growth factor receptor (EGFR) signaling and leads to keratinocyte growth arrest and differentiation. Associates with the cyclin CCNE1-CDK2-CDKN1B complex and inhibits CDK2 kinase activity, leading to RB1 dephosphorylation and thereby G1 arrest in keratinocytes. In association with RALA activates actin depolymerization, which is necessary for keratinocyte differentiation. In the pre-B cell receptor signaling, functions downstream of BLNK by up-regulating IRF4, which in turn activates L chain gene rearrangement. Regulates epithelial tight junctions (TJs) by phosphorylating occludin (OCLN) on threonine residues, which is necessary for the assembly and maintenance of TJs. In association with PLD2 and via TLR4 signaling, is involved in lipopolysaccharide (LPS)-induced RGS2 down-regulation and foam cell formation. Upon PMA stimulation, mediates glioblastoma cell proliferation by activating the mTOR pathway, the PI3K/AKT pathway and the ERK1-dependent phosphorylation of ELK1. Involved in the protection of glioblastoma cells from irradiation-induced apoptosis by preventing caspase-9 activation. In camptothecin-treated MCF-7 cells, regulates NF-kappa-B upstream signaling by activating IKBKB, and confers protection against DNA damage-induced apoptosis. Promotes oncogenic functions of ATF2 in the nucleus while blocking its apoptotic function at mitochondria. Phosphorylates ATF2 which promotes its nuclear retention and transcriptional activity and negatively regulates its mitochondrial localization. The sequence is that of Protein kinase C eta type (Prkch) from Rattus norvegicus (Rat).